Reading from the N-terminus, the 338-residue chain is Legumin B (338 aa).

Positions serine 16–glycine 162 are disordered. The span at asparagine 18–leucine 44 shows a compositional bias: basic and acidic residues. Composition is skewed to acidic residues over residues aspartate 82–glutamate 92 and glutamate 136–glutamate 150. The Cupin type-1 domain maps to glutamate 174–alanine 321.

This sequence belongs to the 11S seed storage protein (globulins) family. As to quaternary structure, hexamer; each subunit is composed of an acidic and a basic chain derived from a single precursor and linked by a disulfide bond.

Its function is as follows. This protein found in the seeds of many leguminous and non-leguminous plants is the source of sulfur-containing amino acids in seed meals. This is Legumin B (LEGB) from Pisum sativum (Garden pea).